A 295-amino-acid polypeptide reads, in one-letter code: Defective in cullin neddylation protein 1 (295 aa).

The UBA-like domain maps to 8–45 (QKTKLRQFVQWTQVTEAVSLNFLAKANWNIEYAMTLYF). In terms of domain architecture, DCUN1 spans 60-272 (VDRSNIERLF…LIDQFVDYCR (213 aa)).

In terms of assembly, interacts with the cullin cul-3. Interacts with ubiquitin via its UBA-like domain. Interacts with ned-8/nedd8.

Its subcellular location is the nucleus. Required for neddylation of cullin components of SCF-type E3 ubiquitin ligase complexes. Neddylation of cullins play an essential role in the regulation of SCF-type complexes activity. Does not act by preventing deneddylation, but rather facilitates neddylation, possibly by acting with rbx-1 to recruit the Nedd8-charged E2 enzyme to the cullin component of SCF-type complexes. This chain is Defective in cullin neddylation protein 1 (dcn-1), found in Caenorhabditis elegans.